Here is a 131-residue protein sequence, read N- to C-terminus: Large ribosomal subunit protein bL12 (131 aa).

Belongs to the bacterial ribosomal protein bL12 family. Homodimer. Part of the ribosomal stalk of the 50S ribosomal subunit. Forms a multimeric L10(L12)X complex, where L10 forms an elongated spine to which 2 to 4 L12 dimers bind in a sequential fashion. Binds GTP-bound translation factors.

Forms part of the ribosomal stalk which helps the ribosome interact with GTP-bound translation factors. Is thus essential for accurate translation. The chain is Large ribosomal subunit protein bL12 from Nocardioides sp. (strain ATCC BAA-499 / JS614).